A 378-amino-acid chain; its full sequence is RIB43A-like with coiled-coils protein 1 (378 aa).

Coiled coils occupy residues 153–250 (RMQQ…VTSD) and 279–334 (EQRA…CAEF).

Belongs to the RIB43A family. As to quaternary structure, microtubule inner protein component of sperm flagellar doublet microtubules.

Its subcellular location is the cytoplasm. It is found in the cytoskeleton. The protein localises to the flagellum axoneme. This Rattus norvegicus (Rat) protein is RIB43A-like with coiled-coils protein 1 (Ribc1).